Here is a 219-residue protein sequence, read N- to C-terminus: Factor in the germline alpha (219 aa).

Residues 65 to 117 form the bHLH domain; it reads ERRRVANAKERERIKNLNRGFARLKALVPFLPQSRKPSKVDILKGATEYIQVL. Residues 124–151 are disordered; the sequence is AKDSKKQDPDEQSYSNNSSESHTSSARQ. Positions 136-148 are enriched in low complexity; sequence SYSNNSSESHTSS.

Heterodimer with TCF3/isoform E12. In terms of tissue distribution, germ cells. Expressed in the fetal ovary, but not by a range of other tissues. Expression increases across mid-gestation, rising some 40-fold by the time of primordial follicle formation.

It is found in the nucleus. Germline specific transcription factor implicated in postnatal oocyte-specific gene expression. Plays a key regulatory role in the expression of multiple oocyte-specific genes, including those that initiate folliculogenesis and those that encode the zona pellucida (ZP1, ZP2 and ZP3) required for fertilization and early embryonic survival. Essential for oocytes to survive and form primordial follicles. The persistence of FIGLA in adult females suggests that it may regulate additional pathways that are essential for normal ovarian development. Binds to the E-box (5'-CANNTG-3') of the ZPs (ZP1, ZP2, ZP3) promoters. The protein is Factor in the germline alpha (FIGLA) of Homo sapiens (Human).